The primary structure comprises 568 residues: Oxygen-dependent choline dehydrogenase (568 aa).

Asp8–Glu37 lines the FAD pocket. His477 acts as the Proton acceptor in catalysis.

This sequence belongs to the GMC oxidoreductase family. It depends on FAD as a cofactor.

It carries out the reaction choline + A = betaine aldehyde + AH2. The catalysed reaction is betaine aldehyde + NAD(+) + H2O = glycine betaine + NADH + 2 H(+). It functions in the pathway amine and polyamine biosynthesis; betaine biosynthesis via choline pathway; betaine aldehyde from choline (cytochrome c reductase route): step 1/1. Functionally, involved in the biosynthesis of the osmoprotectant glycine betaine. Catalyzes the oxidation of choline to betaine aldehyde and betaine aldehyde to glycine betaine at the same rate. The sequence is that of Oxygen-dependent choline dehydrogenase from Pseudomonas syringae pv. syringae (strain B728a).